Here is a 267-residue protein sequence, read N- to C-terminus: Outer membrane protein assembly factor BamD (267 aa).

Positions Met-1–Ala-16 are cleaved as a signal peptide. A lipid anchor (N-palmitoyl cysteine) is attached at Cys-17. Residue Cys-17 is the site of S-diacylglycerol cysteine attachment.

The protein belongs to the BamD family. As to quaternary structure, part of the Bam complex.

It localises to the cell outer membrane. In terms of biological role, part of the outer membrane protein assembly complex, which is involved in assembly and insertion of beta-barrel proteins into the outer membrane. Required for efficient transformation of Neisseria gonorrhoeae by species-related DNA. The protein is Outer membrane protein assembly factor BamD of Neisseria gonorrhoeae.